A 310-amino-acid chain; its full sequence is Elongation factor Ts (310 aa).

Residues 80 to 83 (TDFV) are involved in Mg(2+) ion dislocation from EF-Tu.

Belongs to the EF-Ts family.

It localises to the cytoplasm. Functionally, associates with the EF-Tu.GDP complex and induces the exchange of GDP to GTP. It remains bound to the aminoacyl-tRNA.EF-Tu.GTP complex up to the GTP hydrolysis stage on the ribosome. This chain is Elongation factor Ts, found in Methylocella silvestris (strain DSM 15510 / CIP 108128 / LMG 27833 / NCIMB 13906 / BL2).